A 413-amino-acid chain; its full sequence is E3 ubiquitin ligase ICP22 (413 aa).

Residues 1–124 (MADIPPDPPA…PPRKSKRPRI (124 aa)) form a disordered region. The span at 62-76 (GDLRGGRRRSPRELG) shows a compositional bias: basic and acidic residues. The span at 84-97 (SAESTTGTESEGTG) shows a compositional bias: low complexity. The residue at position 189 (Tyr189) is a Phosphotyrosine; by host. 2 disordered regions span residues 289-334 (LETN…SASG) and 370-390 (AERS…PERE). A compositionally biased stretch (acidic residues) spans 297–309 (SDDEISDATDSDD).

This sequence belongs to the herpesviridae ICP22 family. Tyrosine phosphorylated.

The protein resides in the host nucleus. It functions in the pathway protein modification; protein ubiquitination. Its function is as follows. Functions as an E3 ubiquitin ligase and plays a role in the inhibition of innate immunity by preventing IFN-mediated signaling. Induces the ubiquitination and degradation of host STAT1, STAT2 and IRF9, resulting in the blockade of ISGF3 nuclear translocation. The protein is E3 ubiquitin ligase ICP22 of Human herpesvirus 2 (strain HG52) (HHV-2).